Reading from the N-terminus, the 197-residue chain is Phosphoheptose isomerase (197 aa).

The region spanning Met36–Glu197 is the SIS domain. Position 51–53 (Asn51–Gly53) interacts with substrate. Residues His60 and Glu64 each contribute to the Zn(2+) site. Substrate is bound by residues Glu64, Asn93–Asp94, Ser119–Ser121, Ser124, and Gln174. Zn(2+) is bound by residues Gln174 and His182.

The protein belongs to the SIS family. GmhA subfamily. Homotetramer. It depends on Zn(2+) as a cofactor.

The protein resides in the cytoplasm. The enzyme catalyses 2 D-sedoheptulose 7-phosphate = D-glycero-alpha-D-manno-heptose 7-phosphate + D-glycero-beta-D-manno-heptose 7-phosphate. It participates in carbohydrate biosynthesis; D-glycero-D-manno-heptose 7-phosphate biosynthesis; D-glycero-alpha-D-manno-heptose 7-phosphate and D-glycero-beta-D-manno-heptose 7-phosphate from sedoheptulose 7-phosphate: step 1/1. Its function is as follows. Catalyzes the isomerization of sedoheptulose 7-phosphate in D-glycero-D-manno-heptose 7-phosphate. This chain is Phosphoheptose isomerase, found in Pseudomonas putida (strain GB-1).